Consider the following 335-residue polypeptide: tRNA N6-adenosine threonylcarbamoyltransferase (335 aa).

The Fe cation site is built by histidine 110 and histidine 114. Residues 132–136 (LVSGG), aspartate 165, glycine 178, and asparagine 271 contribute to the substrate site. Residue aspartate 299 participates in Fe cation binding.

The protein belongs to the KAE1 / TsaD family. The cofactor is Fe(2+).

It localises to the cytoplasm. The enzyme catalyses L-threonylcarbamoyladenylate + adenosine(37) in tRNA = N(6)-L-threonylcarbamoyladenosine(37) in tRNA + AMP + H(+). Its function is as follows. Required for the formation of a threonylcarbamoyl group on adenosine at position 37 (t(6)A37) in tRNAs that read codons beginning with adenine. Is involved in the transfer of the threonylcarbamoyl moiety of threonylcarbamoyl-AMP (TC-AMP) to the N6 group of A37, together with TsaE and TsaB. TsaD likely plays a direct catalytic role in this reaction. This Campylobacter jejuni subsp. jejuni serotype O:23/36 (strain 81-176) protein is tRNA N6-adenosine threonylcarbamoyltransferase.